Consider the following 499-residue polypeptide: Phenylalanine--tRNA ligase alpha subunit B (499 aa).

L-phenylalanine contacts are provided by residues threonine 330, glutamine 373 to glutamate 375, and tyrosine 413. A Mg(2+)-binding site is contributed by glutamate 415. Residue phenylalanine 439 participates in L-phenylalanine binding.

Belongs to the class-II aminoacyl-tRNA synthetase family. Phe-tRNA synthetase alpha subunit type 2 subfamily. In terms of assembly, heterotetramer; dimer of two heterodimers formed by alpha and beta subunits. Requires Mg(2+) as cofactor.

Its subcellular location is the cytoplasm. The enzyme catalyses tRNA(Phe) + L-phenylalanine + ATP = L-phenylalanyl-tRNA(Phe) + AMP + diphosphate + H(+). The sequence is that of Phenylalanine--tRNA ligase alpha subunit B (farsa-b) from Xenopus laevis (African clawed frog).